A 351-amino-acid polypeptide reads, in one-letter code: Peptide chain release factor 1 (351 aa).

The residue at position 229 (Gln229) is an N5-methylglutamine.

Belongs to the prokaryotic/mitochondrial release factor family. In terms of processing, methylated by PrmC. Methylation increases the termination efficiency of RF1.

It is found in the cytoplasm. Its function is as follows. Peptide chain release factor 1 directs the termination of translation in response to the peptide chain termination codons UAG and UAA. The sequence is that of Peptide chain release factor 1 from Cereibacter sphaeroides (strain KD131 / KCTC 12085) (Rhodobacter sphaeroides).